The primary structure comprises 603 residues: Elongation factor 4 (603 aa).

The 183-residue stretch at 2 to 184 (NHIRNFSIIA…AVVALIPAPK (183 aa)) folds into the tr-type G domain. Residues 14 to 19 (DHGKST) and 131 to 134 (NKMD) contribute to the GTP site.

It belongs to the TRAFAC class translation factor GTPase superfamily. Classic translation factor GTPase family. LepA subfamily.

It localises to the cell inner membrane. The enzyme catalyses GTP + H2O = GDP + phosphate + H(+). Required for accurate and efficient protein synthesis under certain stress conditions. May act as a fidelity factor of the translation reaction, by catalyzing a one-codon backward translocation of tRNAs on improperly translocated ribosomes. Back-translocation proceeds from a post-translocation (POST) complex to a pre-translocation (PRE) complex, thus giving elongation factor G a second chance to translocate the tRNAs correctly. Binds to ribosomes in a GTP-dependent manner. In Polaromonas naphthalenivorans (strain CJ2), this protein is Elongation factor 4.